The primary structure comprises 267 residues: 5'-nucleotidase SurE (267 aa).

Asp14, Asp15, Ser45, and Asn100 together coordinate a divalent metal cation.

This sequence belongs to the SurE nucleotidase family. The cofactor is a divalent metal cation.

The protein resides in the cytoplasm. It catalyses the reaction a ribonucleoside 5'-phosphate + H2O = a ribonucleoside + phosphate. Nucleotidase that shows phosphatase activity on nucleoside 5'-monophosphates. In Methanosarcina mazei (strain ATCC BAA-159 / DSM 3647 / Goe1 / Go1 / JCM 11833 / OCM 88) (Methanosarcina frisia), this protein is 5'-nucleotidase SurE.